The primary structure comprises 240 residues: Ribosomal RNA small subunit methyltransferase G (240 aa).

S-adenosyl-L-methionine-binding positions include glycine 79, phenylalanine 84, 130–131 (AE), and arginine 149.

The protein belongs to the methyltransferase superfamily. RNA methyltransferase RsmG family.

The protein localises to the cytoplasm. Specifically methylates the N7 position of a guanine in 16S rRNA. In Desulforamulus reducens (strain ATCC BAA-1160 / DSM 100696 / MI-1) (Desulfotomaculum reducens), this protein is Ribosomal RNA small subunit methyltransferase G.